Consider the following 429-residue polypeptide: Phosphomethylpyrimidine synthase (429 aa).

Residues N66, M95, Y124, H163, 185 to 187, 226 to 229, and E265 contribute to the substrate site; these read SRG and DGLR. Position 269 (H269) interacts with Zn(2+). Y292 lines the substrate pocket. H333 provides a ligand contact to Zn(2+). [4Fe-4S] cluster is bound by residues C409, C412, and C416.

It belongs to the ThiC family. [4Fe-4S] cluster serves as cofactor.

The enzyme catalyses 5-amino-1-(5-phospho-beta-D-ribosyl)imidazole + S-adenosyl-L-methionine = 4-amino-2-methyl-5-(phosphooxymethyl)pyrimidine + CO + 5'-deoxyadenosine + formate + L-methionine + 3 H(+). The protein operates within cofactor biosynthesis; thiamine diphosphate biosynthesis. Catalyzes the synthesis of the hydroxymethylpyrimidine phosphate (HMP-P) moiety of thiamine from aminoimidazole ribotide (AIR) in a radical S-adenosyl-L-methionine (SAM)-dependent reaction. The chain is Phosphomethylpyrimidine synthase from Carboxydothermus hydrogenoformans (strain ATCC BAA-161 / DSM 6008 / Z-2901).